A 946-amino-acid chain; its full sequence is Bifunctional glutamine synthetase adenylyltransferase/adenylyl-removing enzyme (946 aa).

Positions 1–441 (MSLLNDAALH…EFNWVIGDDE (441 aa)) are adenylyl removase. Residues 448–946 (DQALSELWAL…VIKIWEKFLD (499 aa)) are adenylyl transferase.

It belongs to the GlnE family. The cofactor is Mg(2+).

The enzyme catalyses [glutamine synthetase]-O(4)-(5'-adenylyl)-L-tyrosine + phosphate = [glutamine synthetase]-L-tyrosine + ADP. It catalyses the reaction [glutamine synthetase]-L-tyrosine + ATP = [glutamine synthetase]-O(4)-(5'-adenylyl)-L-tyrosine + diphosphate. Involved in the regulation of glutamine synthetase GlnA, a key enzyme in the process to assimilate ammonia. When cellular nitrogen levels are high, the C-terminal adenylyl transferase (AT) inactivates GlnA by covalent transfer of an adenylyl group from ATP to specific tyrosine residue of GlnA, thus reducing its activity. Conversely, when nitrogen levels are low, the N-terminal adenylyl removase (AR) activates GlnA by removing the adenylyl group by phosphorolysis, increasing its activity. The regulatory region of GlnE binds the signal transduction protein PII (GlnB) which indicates the nitrogen status of the cell. In Psychromonas ingrahamii (strain DSM 17664 / CCUG 51855 / 37), this protein is Bifunctional glutamine synthetase adenylyltransferase/adenylyl-removing enzyme.